Here is a 279-residue protein sequence, read N- to C-terminus: Small ribosomal subunit protein uS2 (279 aa).

The protein belongs to the universal ribosomal protein uS2 family. As to quaternary structure, component of the small ribosomal subunit. Mature ribosomes consist of a small (40S) and a large (60S) subunit. The 40S subunit contains about 33 different proteins and 1 molecule of RNA (18S). The 60S subunit contains about 49 different proteins and 3 molecules of RNA (25S, 5.8S and 5S). Interacts with ribosomal protein S21.

It localises to the cytoplasm. Its function is as follows. Required for the assembly and/or stability of the 40S ribosomal subunit. Required for the processing of the 20S rRNA-precursor to mature 18S rRNA in a late step of the maturation of 40S ribosomal subunits. The chain is Small ribosomal subunit protein uS2 from Chlamydomonas reinhardtii (Chlamydomonas smithii).